The following is a 266-amino-acid chain: MPNITVTSLLAMKQKGEKITMLTCYDATFAHTASQAGVEVLLIGDSLGMVLQGHDSTLPVTTAETAYHVACVKRGNQGAMILADLPFMANATLEQTLINSATLMQAGAHMIKVEGAAWLAESIRLLAERGIPVCAHMGLTPQAVNVLGGYKVQGRLETQARQMRADAIALEQAGAAMILLECVPSELAEEITQAVKVPVIGIGAGSATDGQVLVLHDMLGLSITGRVPKFVKNFMTGQPDIQSAIRAYVTAVKDLSFPATEHGFSA.

2 residues coordinate Mg(2+): D45 and D84. 3-methyl-2-oxobutanoate-binding positions include D45 to S46, D84, and K112. E114 is a Mg(2+) binding site. The Proton acceptor role is filled by E181.

The protein belongs to the PanB family. As to quaternary structure, homodecamer; pentamer of dimers. Requires Mg(2+) as cofactor.

The protein localises to the cytoplasm. The catalysed reaction is 3-methyl-2-oxobutanoate + (6R)-5,10-methylene-5,6,7,8-tetrahydrofolate + H2O = 2-dehydropantoate + (6S)-5,6,7,8-tetrahydrofolate. The protein operates within cofactor biosynthesis; (R)-pantothenate biosynthesis; (R)-pantoate from 3-methyl-2-oxobutanoate: step 1/2. Catalyzes the reversible reaction in which hydroxymethyl group from 5,10-methylenetetrahydrofolate is transferred onto alpha-ketoisovalerate to form ketopantoate. This Pseudomonas syringae pv. syringae (strain B728a) protein is 3-methyl-2-oxobutanoate hydroxymethyltransferase.